We begin with the raw amino-acid sequence, 305 residues long: GMP synthase [glutamine-hydrolyzing] subunit B (305 aa).

In terms of domain architecture, GMPS ATP-PPase spans 2–184 (VKTEKFIQKS…LGLPPEIQHR (183 aa)). 29–35 (SGGVDSS) provides a ligand contact to ATP.

In terms of assembly, heterodimer composed of a glutamine amidotransferase subunit (A) and a GMP-binding subunit (B).

The catalysed reaction is XMP + L-glutamine + ATP + H2O = GMP + L-glutamate + AMP + diphosphate + 2 H(+). It functions in the pathway purine metabolism; GMP biosynthesis; GMP from XMP (L-Gln route): step 1/1. Functionally, catalyzes the synthesis of GMP from XMP. The sequence is that of GMP synthase [glutamine-hydrolyzing] subunit B from Methanoregula boonei (strain DSM 21154 / JCM 14090 / 6A8).